A 409-amino-acid polypeptide reads, in one-letter code: Tryptophan synthase beta chain (409 aa).

Lys95 carries the N6-(pyridoxal phosphate)lysine modification.

This sequence belongs to the TrpB family. In terms of assembly, tetramer of two alpha and two beta chains. The cofactor is pyridoxal 5'-phosphate.

It catalyses the reaction (1S,2R)-1-C-(indol-3-yl)glycerol 3-phosphate + L-serine = D-glyceraldehyde 3-phosphate + L-tryptophan + H2O. It participates in amino-acid biosynthesis; L-tryptophan biosynthesis; L-tryptophan from chorismate: step 5/5. Functionally, the beta subunit is responsible for the synthesis of L-tryptophan from indole and L-serine. The polypeptide is Tryptophan synthase beta chain (Pseudomonas savastanoi pv. phaseolicola (Pseudomonas syringae pv. phaseolicola)).